A 294-amino-acid polypeptide reads, in one-letter code: uncharacterized protein (294 aa).

The first 16 residues, 1-16, serve as a signal peptide directing secretion; that stretch reads MQNFMVLLLLIVAVVA. 2 N-linked (GlcNAc...) asparagine; by host glycosylation sites follow: asparagine 25 and asparagine 162.

This is an uncharacterized protein from Acheta domesticus (House cricket).